We begin with the raw amino-acid sequence, 581 residues long: Sulfate adenylyltransferase (581 aa).

An N-terminal region spans residues 1–176 (MANAPHGGVL…VQAIQAPTHF (176 aa)). The segment at 177–401 (DYVPLRFTPA…LRESYPPRPQ (225 aa)) is catalytic. Gln-204 serves as a coordination point for sulfate. ATP contacts are provided by residues 204–207 (QTRN) and 298–301 (GRDH). Active-site residues include Thr-205, Arg-206, and Asn-207. Arg-206 is a binding site for sulfate. Ala-302 is a sulfate binding site. ATP is bound at residue Met-340. Positions 402–581 (QGFTILLTGL…IMILESQNLV (180 aa)) are allosteric regulation domain; adenylyl-sulfate kinase-like. 3'-phosphoadenylyl sulfate-binding positions include 441 to 444 (EELR), 486 to 487 (TA), and Arg-526.

It in the N-terminal section; belongs to the sulfate adenylyltransferase family. This sequence in the C-terminal section; belongs to the APS kinase family. Homohexamer. Dimer of trimers.

Its subcellular location is the cytoplasm. It catalyses the reaction sulfate + ATP + H(+) = adenosine 5'-phosphosulfate + diphosphate. The protein operates within sulfur metabolism; hydrogen sulfide biosynthesis; sulfite from sulfate: step 1/3. Allosterically inhibited by 3'-phosphoadenosine 5'-phosphosulfate (PAPS). In terms of biological role, catalyzes the first intracellular reaction of sulfate assimilation, forming adenosine-5'-phosphosulfate (APS) from inorganic sulfate and ATP. Plays an important role in sulfate activation as a component of the biosynthesis pathway of sulfur-containing amino acids. The sequence is that of Sulfate adenylyltransferase from Cryptococcus neoformans var. neoformans serotype D (strain B-3501A) (Filobasidiella neoformans).